A 178-amino-acid polypeptide reads, in one-letter code: MSEQNVARRYARALFNIAREQGTAGEFANGLEEVSRTLAENSDFRRVLYHQLIPVREKQKLIDTIFPDINPLLKNFLHLVLAKGRERALPEMAAQFRRLVDQAENILPVEVTSAITLREDILAGLKERLAGITRRNIRLSSRVNPELIGGVVIRLGDRVLDASVKKKLELLGEHLKRA.

This sequence belongs to the ATPase delta chain family. In terms of assembly, F-type ATPases have 2 components, F(1) - the catalytic core - and F(0) - the membrane proton channel. F(1) has five subunits: alpha(3), beta(3), gamma(1), delta(1), epsilon(1). F(0) has three main subunits: a(1), b(2) and c(10-14). The alpha and beta chains form an alternating ring which encloses part of the gamma chain. F(1) is attached to F(0) by a central stalk formed by the gamma and epsilon chains, while a peripheral stalk is formed by the delta and b chains.

The protein localises to the cell membrane. Functionally, f(1)F(0) ATP synthase produces ATP from ADP in the presence of a proton or sodium gradient. F-type ATPases consist of two structural domains, F(1) containing the extramembraneous catalytic core and F(0) containing the membrane proton channel, linked together by a central stalk and a peripheral stalk. During catalysis, ATP synthesis in the catalytic domain of F(1) is coupled via a rotary mechanism of the central stalk subunits to proton translocation. This protein is part of the stalk that links CF(0) to CF(1). It either transmits conformational changes from CF(0) to CF(1) or is implicated in proton conduction. The sequence is that of ATP synthase subunit delta from Moorella thermoacetica (strain ATCC 39073 / JCM 9320).